Reading from the N-terminus, the 222-residue chain is Adenylate kinase, chloroplastic (222 aa).

An ATP-binding site is contributed by 15 to 20 (ASGKGT). Residues 35–64 (SAGDLLRAEIAAGSENGKRAKEFMEKGQLV) are NMP. AMP-binding positions include arginine 41, 62–64 (QLV), 91–94 (GYPR), and glutamine 98. Residues 128–161 (GRRLDPVTGKIYHLKYSPPENEEIASRLTQRFDD) are LID. Arginine 129 is an ATP binding site. AMP is bound at residue arginine 158. Position 195 (alanine 195) interacts with ATP.

In terms of assembly, monomer.

It localises to the plastid. Its subcellular location is the chloroplast. It carries out the reaction AMP + ATP = 2 ADP. In terms of biological role, catalyzes the reversible transfer of the terminal phosphate group between ATP and AMP. Plays an important role in cellular energy homeostasis and in adenine nucleotide metabolism. The maize enzyme also works with CMP, albeit with 10% of the activity with AMP. This chain is Adenylate kinase, chloroplastic (ADK1), found in Zea mays (Maize).